Reading from the N-terminus, the 101-residue chain is Small ribosomal subunit protein uS14 (101 aa).

Belongs to the universal ribosomal protein uS14 family. In terms of assembly, part of the 30S ribosomal subunit. Contacts proteins S3 and S10.

In terms of biological role, binds 16S rRNA, required for the assembly of 30S particles and may also be responsible for determining the conformation of the 16S rRNA at the A site. In Burkholderia multivorans (strain ATCC 17616 / 249), this protein is Small ribosomal subunit protein uS14.